Reading from the N-terminus, the 159-residue chain is Ribonuclease H (159 aa).

The RNase H type-1 domain maps to 1-142 (MHKQVEIFTD…CDELAKAAAQ (142 aa)). Residues Asp10, Glu48, Asp70, and Asp134 each coordinate Mg(2+). The disordered stretch occupies residues 135-159 (ELAKAAAQSPTKEDTGYLESQQDKT). Residues 145 to 159 (TKEDTGYLESQQDKT) are compositionally biased toward basic and acidic residues.

Belongs to the RNase H family. As to quaternary structure, monomer. Mg(2+) is required as a cofactor.

It is found in the cytoplasm. It carries out the reaction Endonucleolytic cleavage to 5'-phosphomonoester.. Functionally, endonuclease that specifically degrades the RNA of RNA-DNA hybrids. This is Ribonuclease H from Proteus mirabilis (strain HI4320).